Here is a 382-residue protein sequence, read N- to C-terminus: Na(+)/H(+) antiporter NhaA 2 (382 aa).

The next 11 helical transmembrane spans lie at 8-28 (FFSS…AAII), 49-69 (LSVE…MVGL), 87-107 (ALPG…YVWF), 115-135 (LAGW…VLAL), 146-166 (IFLS…IALF), 169-189 (SNIS…LFIM), 209-229 (FFML…ALFI), 252-272 (WVTF…ALSG), 286-306 (VALG…LLAV), 325-345 (VSVL…LAFA), and 353-373 (EVKV…MLIL).

Belongs to the NhaA Na(+)/H(+) (TC 2.A.33) antiporter family.

It is found in the cell inner membrane. It catalyses the reaction Na(+)(in) + 2 H(+)(out) = Na(+)(out) + 2 H(+)(in). Its function is as follows. Na(+)/H(+) antiporter that extrudes sodium in exchange for external protons. The chain is Na(+)/H(+) antiporter NhaA 2 from Klebsiella pneumoniae subsp. pneumoniae (strain ATCC 700721 / MGH 78578).